Reading from the N-terminus, the 217-residue chain is Adenylate kinase (217 aa).

10–15 (GAGKGT) contributes to the ATP binding site. Positions 30–59 (STGDMFRAAMKEGTPLGLQAKEYIDRGDLV) are NMP. AMP is bound by residues Thr31, Arg36, 57 to 59 (DLV), 85 to 88 (GFPR), and Gln92. Residues 126 to 163 (GRRICRNCGATYHLVFHPPAQPGVCDKCGGELYQRPDD) are LID. Arg127 provides a ligand contact to ATP. Residues Cys130 and Cys133 each contribute to the Zn(2+) site. 136 to 137 (TY) is a binding site for ATP. Cys150 and Cys153 together coordinate Zn(2+). The AMP site is built by Arg160 and Arg171. Gln199 lines the ATP pocket.

It belongs to the adenylate kinase family. Monomer.

The protein resides in the cytoplasm. The catalysed reaction is AMP + ATP = 2 ADP. The protein operates within purine metabolism; AMP biosynthesis via salvage pathway; AMP from ADP: step 1/1. Catalyzes the reversible transfer of the terminal phosphate group between ATP and AMP. Plays an important role in cellular energy homeostasis and in adenine nucleotide metabolism. The polypeptide is Adenylate kinase (Geobacillus thermodenitrificans (strain NG80-2)).